A 185-amino-acid polypeptide reads, in one-letter code: Gastrokine-1 (185 aa).

The first 20 residues, 1–20 (MKFTIAFAGLLGVFLTPALA), serve as a signal peptide directing secretion. The BRICHOS domain maps to 54-150 (NNGWNSWNAL…MCKGIPTYMA (97 aa)). Residues C81 and C142 are joined by a disulfide bond.

Belongs to the gastrokine family. As to expression, highly expressed specifically in surface cells of the antrum mucosa from where it is secreted.

The protein localises to the secreted. It localises to the cytoplasmic granule. The protein resides in the golgi apparatus. Functionally, has mitogenic activity and may be involved in maintaining the integrity of the gastric mucosal epithelium. This is Gastrokine-1 (GKN1) from Sus scrofa (Pig).